A 512-amino-acid chain; its full sequence is ATP synthase subunit alpha (512 aa).

Position 169 to 176 (169 to 176 (GDRQTGKT)) interacts with ATP.

This sequence belongs to the ATPase alpha/beta chains family. F-type ATPases have 2 components, CF(1) - the catalytic core - and CF(0) - the membrane proton channel. CF(1) has five subunits: alpha(3), beta(3), gamma(1), delta(1), epsilon(1). CF(0) has three main subunits: a(1), b(2) and c(9-12). The alpha and beta chains form an alternating ring which encloses part of the gamma chain. CF(1) is attached to CF(0) by a central stalk formed by the gamma and epsilon chains, while a peripheral stalk is formed by the delta and b chains.

Its subcellular location is the cell inner membrane. It carries out the reaction ATP + H2O + 4 H(+)(in) = ADP + phosphate + 5 H(+)(out). Functionally, produces ATP from ADP in the presence of a proton gradient across the membrane. The alpha chain is a regulatory subunit. This Aromatoleum aromaticum (strain DSM 19018 / LMG 30748 / EbN1) (Azoarcus sp. (strain EbN1)) protein is ATP synthase subunit alpha.